A 212-amino-acid polypeptide reads, in one-letter code: Putative inactive 6-phospho-alpha-glucosidase (212 aa).

4-70 (FSVVVAGGGS…PDIAFSYTTD (67 aa)) contributes to the NAD(+) binding site. Cys-169 and His-200 together coordinate Mn(2+).

It belongs to the glycosyl hydrolase 4 family.

The protein is Putative inactive 6-phospho-alpha-glucosidase of Escherichia coli (strain K12).